The chain runs to 378 residues: Sphingosine 1-phosphate receptor 3 (378 aa).

Over 1 to 40 the chain is Extracellular; that stretch reads MATALPPRLQPVRGNETLREHYQYVGKLAGRLKEASEGST. N-linked (GlcNAc...) asparagine glycosylation occurs at Asn15. The helical transmembrane segment at 41 to 65 threads the bilayer; it reads LTTVLFLVICSFIVLENLMVLIAIW. The Cytoplasmic portion of the chain corresponds to 66 to 72; it reads KNNKFHN. A helical membrane pass occupies residues 73-101; it reads RMYFFIGNLALCDLLAGIAYKVNILMSGK. Residues 102–115 are Extracellular-facing; sequence KTFSLSPTVWFLRE. The chain crosses the membrane as a helical span at residues 116 to 134; it reads GSMFVALGASTCSLLAIAI. The Cytoplasmic segment spans residues 135 to 153; that stretch reads ERHLTMIKMRPYDANKRHR. The chain crosses the membrane as a helical span at residues 154–179; sequence VFLLIGMCWLIAFTLGALPILGWNCL. The Extracellular segment spans residues 180-195; sequence HNLPDCSTILPLYSKK. The chain crosses the membrane as a helical span at residues 196-216; the sequence is YIAFCISIFTAILVTIVILYA. The Cytoplasmic portion of the chain corresponds to 217-243; it reads RIYFLVKSSSRKVANHNNSERSMALLR. A helical membrane pass occupies residues 244–265; the sequence is TVVIVVSVFIACWSPLFILFLI. Over 266 to 281 the chain is Extracellular; it reads DVACRVQACPILFKAQ. A helical membrane pass occupies residues 282–302; sequence WFIVLAVLNSAMNPVIYTLAS. Residues 303–378 lie on the Cytoplasmic side of the membrane; that stretch reads KEMRRAFFRL…AALQNGIFCN (76 aa). Ser326 carries the post-translational modification Phosphoserine. A disordered region spans residues 327–357; that stretch reads PIQPALDPSRSKSSSSNNSSHSPKVKEDLPH. The segment covering 337–348 has biased composition (low complexity); the sequence is SKSSSSNNSSHS.

The protein belongs to the G-protein coupled receptor 1 family. As to expression, expressed in all tissues, but most abundantly in heart, placenta, kidney, and liver.

Its subcellular location is the cell membrane. Its function is as follows. Receptor for the lysosphingolipid sphingosine 1-phosphate (S1P). S1P is a bioactive lysophospholipid that elicits diverse physiological effect on most types of cells and tissues. When expressed in rat HTC4 hepatoma cells, is capable of mediating S1P-induced cell proliferation and suppression of apoptosis. The protein is Sphingosine 1-phosphate receptor 3 of Homo sapiens (Human).